Consider the following 338-residue polypeptide: tRNA N6-adenosine threonylcarbamoyltransferase (338 aa).

Residues H111 and H115 each contribute to the Fe cation site. Residues L134–G138, D167, G180, and N272 contribute to the substrate site. Fe cation is bound at residue D300.

It belongs to the KAE1 / TsaD family. Fe(2+) serves as cofactor.

The protein localises to the cytoplasm. The catalysed reaction is L-threonylcarbamoyladenylate + adenosine(37) in tRNA = N(6)-L-threonylcarbamoyladenosine(37) in tRNA + AMP + H(+). Its function is as follows. Required for the formation of a threonylcarbamoyl group on adenosine at position 37 (t(6)A37) in tRNAs that read codons beginning with adenine. Is involved in the transfer of the threonylcarbamoyl moiety of threonylcarbamoyl-AMP (TC-AMP) to the N6 group of A37, together with TsaE and TsaB. TsaD likely plays a direct catalytic role in this reaction. The sequence is that of tRNA N6-adenosine threonylcarbamoyltransferase from Vibrio atlanticus (strain LGP32) (Vibrio splendidus (strain Mel32)).